Consider the following 124-residue polypeptide: uncharacterized protein (124 aa).

The N-terminal stretch at Met-1–Ala-23 is a signal peptide.

Belongs to the cytochrome b562 family.

This is an uncharacterized protein from Pasteurella multocida (strain Pm70).